A 183-amino-acid chain; its full sequence is MNITQIIEKLKQNEVVAYPTEAVFGLGCNPFSQSAVEKLLILKQRPREKGLILVAPKLDYFFSFIDKEQINSQHWQKLQQTYPRPITWIVPAKKDIAKFLCGNFNSIAIRVSQHPAIKILCEQTGFALTSTSANLSGIAPCKTSDEVRLQFGADFPVLDMSVGSATKPSEIRDLFTNQLVRQG.

The region spanning 1–183 (MNITQIIEKL…LFTNQLVRQG (183 aa)) is the YrdC-like domain.

Belongs to the SUA5 family. TsaC subfamily.

The protein localises to the cytoplasm. The enzyme catalyses L-threonine + hydrogencarbonate + ATP = L-threonylcarbamoyladenylate + diphosphate + H2O. Functionally, required for the formation of a threonylcarbamoyl group on adenosine at position 37 (t(6)A37) in tRNAs that read codons beginning with adenine. Catalyzes the conversion of L-threonine, HCO(3)(-)/CO(2) and ATP to give threonylcarbamoyl-AMP (TC-AMP) as the acyladenylate intermediate, with the release of diphosphate. The chain is Threonylcarbamoyl-AMP synthase from Histophilus somni (strain 2336) (Haemophilus somnus).